The sequence spans 924 residues: MNRRDFIKNTAIASACGVAGLSVPSSVLANTENKWRWDKAVCRFCGTGCGILVARQDGKIVAVKGDPAAPVNRGLNCIKGYFNAKIMYGEDRLVTPLLRVNAKGEFDKNGKFQQVSWQRAFDEMEKHFKKAYKEKGVEGIGIFASGQYTIQEGYAAAKLVKAGFRSNNIDPNARHCMASAVVGFMQTFGVDEPSGCYDDIELTDTIITWGANMAEMHPILWSRVSDRKLSNLDKVKIVNLSTFSNRTSHIADTEIIFKPNTDLAIWNYIAREIVYNHPEAMDKEFVEKHCIFTTGYADIGYGMRNNPNHPKFKASEKDTVAKQNSIILDDEEAVSLAYLGVKAGDKFEMKHQSAPDAHWEISFEDFKKALEPYTLDYVAKVAKGNEDESIEEFKKKLQELANLYIEKNRKVVSFWTMGFNQHTRGSWVNEQAYMVHFLLGKQAKPGSGAFSLTGQPSACGTAREVGTFSHRLPADMVVANPKHREISEKIWKVPAKTINPKPGAPYLKIMRDLEDGNIKFAWVQVNNPWQNTANANHWIAAAREMDNFIVVSDCYPGISAKVADLILPSAMIYEKWGAYGNAERRTQHWKQQVLPVGEAMSDTWQILEFAKRFKLKEVWGETKVDDKLTLPSILEEAKAMGYNEDDTLYDVLFANKEAKSFKANDPIAKGFDNSDVNGDERKIIGSDGKEFDGYGFFVQKYLWEEYRKFGLGHGHDLADFDTYHKVRGLRWPVVNGKETQWRFNTKFDYYAKKAAPNSDFAFYGAFAKELPKGDLIAPQTQEKYSLKNKAKIFFRPFMKAPERPSEEYPFWLCTGRVLEHWHSGTMTMRVPELFRAVPEALCYMNEDDAKKMQIAQGDIVWVESRRGKVKARVDFRGRNKPSKGLVYVPWFDENVYINKVTLDATCPLSNQTDFKKCAVKITKA.

The segment at residues 1–29 (MNRRDFIKNTAIASACGVAGLSVPSSVLA) is a signal peptide (tat-type signal). A 4Fe-4S Mo/W bis-MGD-type domain is found at 35 to 91 (WRWDKAVCRFCGTGCGILVARQDGKIVAVKGDPAAPVNRGLNCIKGYFNAKIMYGED). 4 residues coordinate [4Fe-4S] cluster: cysteine 42, cysteine 45, cysteine 49, and cysteine 77. Mo-bis(molybdopterin guanine dinucleotide) contacts are provided by residues lysine 79, glutamine 147, asparagine 172, cysteine 176, 209-216 (WGANMAEM), methionine 417, glutamine 421, asparagine 527, 552-553 (SD), lysine 575, aspartate 602, and 814-823 (TGRVLEHWHS). Tryptophan 890 serves as a coordination point for substrate. Mo-bis(molybdopterin guanine dinucleotide)-binding residues include asparagine 898 and lysine 915.

The protein belongs to the prokaryotic molybdopterin-containing oxidoreductase family. NasA/NapA/NarB subfamily. As to quaternary structure, component of the periplasmic nitrate reductase NapAB complex composed of NapA and NapB. [4Fe-4S] cluster is required as a cofactor. Mo-bis(molybdopterin guanine dinucleotide) serves as cofactor. In terms of processing, predicted to be exported by the Tat system. The position of the signal peptide cleavage has not been experimentally proven.

The protein resides in the periplasm. The catalysed reaction is 2 Fe(II)-[cytochrome] + nitrate + 2 H(+) = 2 Fe(III)-[cytochrome] + nitrite + H2O. Its function is as follows. Catalytic subunit of the periplasmic nitrate reductase complex NapAB. Receives electrons from NapB and catalyzes the reduction of nitrate to nitrite. This is Periplasmic nitrate reductase from Campylobacter lari (strain RM2100 / D67 / ATCC BAA-1060).